The following is a 144-amino-acid chain: UPF0225 protein RSc0270 (144 aa).

Belongs to the UPF0225 family.

In Ralstonia nicotianae (strain ATCC BAA-1114 / GMI1000) (Ralstonia solanacearum), this protein is UPF0225 protein RSc0270.